The sequence spans 291 residues: 4-hydroxy-tetrahydrodipicolinate synthase (291 aa).

T45 is a binding site for pyruvate. The Proton donor/acceptor role is filled by Y133. K161 functions as the Schiff-base intermediate with substrate in the catalytic mechanism. I203 is a binding site for pyruvate.

The protein belongs to the DapA family. In terms of assembly, homotetramer; dimer of dimers.

Its subcellular location is the cytoplasm. The catalysed reaction is L-aspartate 4-semialdehyde + pyruvate = (2S,4S)-4-hydroxy-2,3,4,5-tetrahydrodipicolinate + H2O + H(+). It functions in the pathway amino-acid biosynthesis; L-lysine biosynthesis via DAP pathway; (S)-tetrahydrodipicolinate from L-aspartate: step 3/4. Catalyzes the condensation of (S)-aspartate-beta-semialdehyde [(S)-ASA] and pyruvate to 4-hydroxy-tetrahydrodipicolinate (HTPA). In Teredinibacter turnerae (strain ATCC 39867 / T7901), this protein is 4-hydroxy-tetrahydrodipicolinate synthase.